We begin with the raw amino-acid sequence, 347 residues long: NADH-ubiquinone oxidoreductase chain 2 (347 aa).

10 helical membrane-spanning segments follow: residues 3 to 23 (PPIL…VLTS), 25 to 45 (HWLT…PILM), 60 to 80 (LLTQ…NLMF), 96 to 116 (AMVT…FWVP), 149 to 169 (IDPN…GWGG), 178 to 198 (ILAY…LYNP), 200 to 220 (MMLL…MLFM), 237 to 257 (APLI…LPPL), 274 to 294 (EMII…YFYM), and 323 to 343 (MILL…TPLL).

Belongs to the complex I subunit 2 family. In terms of assembly, core subunit of respiratory chain NADH dehydrogenase (Complex I) which is composed of 45 different subunits. Interacts with TMEM242.

It is found in the mitochondrion inner membrane. The catalysed reaction is a ubiquinone + NADH + 5 H(+)(in) = a ubiquinol + NAD(+) + 4 H(+)(out). Core subunit of the mitochondrial membrane respiratory chain NADH dehydrogenase (Complex I) which catalyzes electron transfer from NADH through the respiratory chain, using ubiquinone as an electron acceptor. Essential for the catalytic activity and assembly of complex I. The chain is NADH-ubiquinone oxidoreductase chain 2 from Mungos mungo (Banded mongoose).